Consider the following 433-residue polypeptide: MENELEHLNWNIKHALLQLEGPLAQELDSCLEVSPGALSPSNSVYQKILDTVQVLDKLLVTLTPPHMTLVDGVFAFTNSKVLLCASEYALADHVQKLQPCSISQLAEATGLHEQGLFQIVRYLREMGYFSQDPKTGLLSNNRLSNLLRKDHWATWINWVDFFPREYYDLLSRLPDQLRSDQPKTATELFYNTDKPIYQYLAETGRAAGFHKVTGTGSVVEAPGLLADYPWEEVKSETVVDVGAGVGDFIRSYLEKFPDATAAAFELPSTAEILKQRFPDDDPLTSRIVSITGGDFFQDPIPESSVYLLRWILHNWGDEDCIKLLRRIRETMVIKPGVSRVLIIESVLFDGRLGRGARYADIRMLARCRNKERTLGEYRKLAEEAGWRLNRVVSPRGCLTQIMELRPVGACTGSPRANGNGNSAGGLEWESELM.

S-adenosyl-L-methionine contacts are provided by residues Glu265 and Gly293–Phe295. The active-site Proton acceptor is His313. The tract at residues Ser413–Met433 is disordered.

Belongs to the class I-like SAM-binding methyltransferase superfamily. Cation-independent O-methyltransferase family. COMT subfamily.

It functions in the pathway secondary metabolite biosynthesis. In terms of biological role, O-methyltransferase; part of the gene cluster that mediates the biosynthesis of hexadehydro-astechrome (HAS), a tryptophan-derived iron(III)-complex that acts as a virulence factor in infected mice. Within the pathway, hasC, with the cytochrome P450 monooxygenase hasH and the FAD-linked oxidoreductase hasG, convert the hasE-prenylated Trp-Ala-dipeptide into an O-methylated diketopiperazine that is then released from the hasD NRPS. The HAS biosynthesis begins with the synthesis of a tethered Trp-Ala dipeptide by the NRPS hasD. The 7-dimethylallyltryptophan synthase hasE then catalyzes the prenylation of the hasD-tethered tryptophan or the resulting tethered Trp-Ala dipeptide at the C-7 position of the indole moiety. HAS biosynthesis continues via tethered intermediates with the succesive actions of the cytochrome P450 monooxygenase hasH, the O-methyltransferase hasC, and the FAD-linked oxidoreductase hasG. The resulting O-methylated diketopiperazine is then released from hasD. Finally, three O-methylated diketopiperazine molecules assemble in a trimeric complex with Fe(III) to produce hexadehydro-astechrome. The sequence is that of O-methyltransferase hasC from Aspergillus fumigatus (strain CBS 144.89 / FGSC A1163 / CEA10) (Neosartorya fumigata).